We begin with the raw amino-acid sequence, 737 residues long: uncharacterized protein (737 aa).

7 consecutive transmembrane segments (helical) span residues 11 to 31 (LSLLLFYFLAFLLLWEWLRPL), 36 to 56 (ETKHTGFFSVFIGLTFLLTFF), 60 to 80 (WFVTVPFCVIFTLISIHILFY), 118 to 138 (TLLFFVLLWLLVYLLHYWVIY), 142 to 162 (ILFFFLMTVAYITILDTFTPY), 164 to 184 (ATFAVIRIVLIGFFMLGLLYL), and 200 to 220 (VLKWFLPLSVLVLAATGFGLA). Positions 556 to 611 (PAQFTSSDTKDSGSDSSSSPKKAKEKQKEEKKQPQKEEKQKEKREPAVSKKPSASH) are disordered. Positions 581-603 (KQKEEKKQPQKEEKQKEKREPAV) are enriched in basic and acidic residues. The helical transmembrane segment at 618-638 (LYAALAVLAVLLVAAVLLYVF) threads the bilayer.

It localises to the cell membrane. This is an uncharacterized protein from Bacillus subtilis (strain 168).